A 521-amino-acid polypeptide reads, in one-letter code: MRPKNYSQMEKPISITTGKFRTNNNNNHNNVWFVVPLFFILCFVLLCFDYSALFTDTDETAFSIPDVTQKSTSSEFTKDDNFSRFPDDPSPDSSCSGRYIYVHELPYRFNGDLLDNCFKITRGTEKDICPYIENYGFGPVIKNYENVLLKQSWFTTNQFMLEVIFHNKMINYRCLTNDSSLASAVFVPFYAGLDMSRYLWGFNITVRDSSSHELMDWLVVQKEWGRMSGRDHFLVSGRIAWDFRRQTDNESDWGSKLRFLPESRNMSMLSIESSSWKNDYAIPYPTCFHPRSVDEIVEWQELMRSRKREYLFTFAGAPRPEYKDSVRGKIIDECLESKKQCYLLDCNYGNVNCDNPVNVMKVFRNSVFCLQPPGDSYTRRSMFDSILAGCIPVFFHPGTAYAQYKWHLPKNHSSYSVYLPVKDVKEWNIKIKERLIEIPEERVVRLREEVIRLIPKVVYADPKYGSDGSEDAFELAVKGMLERIEEVREMMRQGKDGSDGFDDRDDYKYTFSPYEEPQVLA.

Topologically, residues 1 to 30 are cytoplasmic; the sequence is MRPKNYSQMEKPISITTGKFRTNNNNNHNN. The helical; Signal-anchor for type II membrane protein transmembrane segment at 31-51 threads the bilayer; the sequence is VWFVVPLFFILCFVLLCFDYS. The Lumenal segment spans residues 52-521; that stretch reads ALFTDTDETA…SPYEEPQVLA (470 aa). Positions 72–92 are disordered; that stretch reads TSSEFTKDDNFSRFPDDPSPD. The segment covering 76-87 has biased composition (basic and acidic residues); sequence FTKDDNFSRFPD. Asn-81, Asn-177, Asn-203, Asn-249, Asn-265, and Asn-411 each carry an N-linked (GlcNAc...) asparagine glycan. Residues 492–521 are disordered; the sequence is RQGKDGSDGFDDRDDYKYTFSPYEEPQVLA.

This sequence belongs to the glycosyltransferase 47 family. Expressed in roots, hypocotyls, cotyledons, leaves, stems, stamens and carpels.

The protein localises to the golgi apparatus membrane. In terms of biological role, functions in xyloglucan synthesis by adding side chains to the xylosylated glucan backbone. Involved in the galactosylation of hemicellulose xyloglucan. The sequence is that of Probable xyloglucan galactosyltransferase GT14 from Arabidopsis thaliana (Mouse-ear cress).